We begin with the raw amino-acid sequence, 126 residues long: Large ribosomal subunit protein uL22c (126 aa).

Belongs to the universal ribosomal protein uL22 family. Part of the 50S ribosomal subunit.

It is found in the plastid. Its subcellular location is the chloroplast. In terms of biological role, this protein binds specifically to 23S rRNA. Its function is as follows. The globular domain of the protein is located near the polypeptide exit tunnel on the outside of the subunit, while an extended beta-hairpin is found that lines the wall of the exit tunnel in the center of the 70S ribosome. The chain is Large ribosomal subunit protein uL22c (rpl22) from Cryptomeria japonica (Japanese cedar).